An 84-amino-acid chain; its full sequence is Small ribosomal subunit protein bS16 (84 aa).

Belongs to the bacterial ribosomal protein bS16 family.

The polypeptide is Small ribosomal subunit protein bS16 (Burkholderia ambifaria (strain MC40-6)).